The sequence spans 855 residues: MICAL-like protein 1 (855 aa).

The region spanning Ala2 to Thr108 is the Calponin-homology (CH) domain. Disordered regions lie at residues Ser110–Cys165, Gly226–Asp253, and Gln269–Pro659. Residues Pro124 to Ala135 are compositionally biased toward low complexity. An LIM zinc-binding domain is found at Ser163 to Gly226. Residues Gln269–Thr278 show a composition bias toward polar residues. A phosphoserine mark is found at Ser293 and Ser307. Over residues Glu308–Gln325 the composition is skewed to polar residues. Phosphothreonine is present on residues Thr313 and Thr316. The segment covering Leu356–Pro367 has biased composition (basic and acidic residues). Positions Asn423–Phe425 match the NPF1 motif. The segment covering Phe425–Ala434 has biased composition (acidic residues). Residues Val439 to Thr449 show a composition bias toward pro residues. Phosphothreonine is present on residues Thr461 and Thr463. Phosphoserine is present on residues Ser464, Ser465, Ser478, and Ser480. Residues Pro499–Ser514 are compositionally biased toward low complexity. The span at Pro542 to His554 shows a compositional bias: polar residues. Residues Ser555 to Gln570 are compositionally biased toward low complexity. Ser613 is subject to Phosphoserine. The NPF2 signature appears at Asn625–Phe627. The segment at Lys644 to Ser855 is mediates the interaction with RAB13 and intramolecular interaction with the calponin-homology (CH) domain. Positions Arg663 to Thr810 constitute a bMERB domain. Positions Glu679 to Gly703 form a coiled coil. 2 positions are modified to phosphoserine: Ser682 and Ser732. Positions His692–Ser855 are necessary and sufficient to associate with tubular recycling endosome membranes, mediate phosphatidic acid-binding and membrane tubulation. The stretch at Leu794 to Glu822 forms a coiled coil. The segment covering Lys815–Lys826 has biased composition (basic and acidic residues). Residues Lys815 to Ser855 form a disordered region.

Homooligomer. Interacts (via NPF1 motif) with EHD1 (via EH domain); the interaction is direct and probably recruits EHD1 to membranes. Interacts with EHD3 (via EH domain). Interacts with RAB35 (GTP-bound form); the interaction is direct and probably recruits MICALL1 to membranes. Interacts with ACAP2; the interaction is indirect through RAB35. Interacts with RAB8A (GTP-bound form); regulates RAB8A association with recycling endosomes. Interacts with RAB13 (GTP-bound form). Interacts with ARF6 (GTP-bound form). Interacts with PACSIN2 (via the SH3 domain). Interacts with DPYSL2.

Its subcellular location is the recycling endosome membrane. The protein localises to the late endosome membrane. It localises to the cell projection. It is found in the cilium membrane. The protein resides in the cytoplasm. Its subcellular location is the cytoskeleton. The protein localises to the microtubule organizing center. It localises to the centrosome. It is found in the centriole. Lipid-binding protein with higher affinity for phosphatidic acid, a lipid enriched in recycling endosome membranes. On endosome membranes, acts as a downstream effector of Rab proteins recruiting cytosolic proteins to regulate membrane tubulation. Involved in a late step of receptor-mediated endocytosis regulating for instance endocytosed-EGF receptor trafficking. Alternatively, regulates slow endocytic recycling of endocytosed proteins back to the plasma membrane. Also involved in cargo protein delivery to the plasma membrane. Plays a role in ciliogenesis coordination, recruits EHD1 to primary cilium where it is anchored to the centriole through interaction with tubulins. May indirectly play a role in neurite outgrowth. This chain is MICAL-like protein 1 (Micall1), found in Rattus norvegicus (Rat).